Consider the following 86-residue polypeptide: MANIKSAIKRVEVNEKKRVSNSKQLSAMRTEVKRVEKAVEANDTDNAKSLFQSASKHIDKAAQKGIIHQNAANRQKSRLANKINAL.

The protein belongs to the bacterial ribosomal protein bS20 family.

Functionally, binds directly to 16S ribosomal RNA. The polypeptide is Small ribosomal subunit protein bS20 (Oceanobacillus iheyensis (strain DSM 14371 / CIP 107618 / JCM 11309 / KCTC 3954 / HTE831)).